The primary structure comprises 252 residues: MKTVTVKDLVIGAGAPKIIVSLMAKDIARVKSEALAYRETDFDILEWRVDHFADLSNVESVMAAAKILRETMPEKPLLFTFRSAKEGGEQAISTEAYIALNRAAIDSGLVDMIDLELFTGDDQVKETVAYAHAHDVKVVMSNHDFHKTPEAEEIIARLRKMQSFDADIPKIALMPQSTSDVLTLLAATLEMQEQYADRPIITMSMAKTGVISRLAGEVFGSAATFGAVKKASAPGQISVNDLRTVLTILHQA.

3-dehydroquinate is bound by residues Ser-21, 46 to 48, and Arg-82; that span reads EWR. The active-site Proton donor/acceptor is the His-143. Residue Lys-170 is the Schiff-base intermediate with substrate of the active site. 3 residues coordinate 3-dehydroquinate: Arg-213, Ser-232, and Gln-236.

It belongs to the type-I 3-dehydroquinase family. As to quaternary structure, homodimer.

The enzyme catalyses 3-dehydroquinate = 3-dehydroshikimate + H2O. The protein operates within metabolic intermediate biosynthesis; chorismate biosynthesis; chorismate from D-erythrose 4-phosphate and phosphoenolpyruvate: step 3/7. Involved in the third step of the chorismate pathway, which leads to the biosynthesis of aromatic amino acids. Catalyzes the cis-dehydration of 3-dehydroquinate (DHQ) and introduces the first double bond of the aromatic ring to yield 3-dehydroshikimate. The protein is 3-dehydroquinate dehydratase of Shigella dysenteriae serotype 1 (strain Sd197).